A 393-amino-acid chain; its full sequence is NAD(P)H-quinone oxidoreductase subunit H, chloroplastic (393 aa).

Belongs to the complex I 49 kDa subunit family. NDH is composed of at least 16 different subunits, 5 of which are encoded in the nucleus.

The protein localises to the plastid. It localises to the chloroplast thylakoid membrane. It carries out the reaction a plastoquinone + NADH + (n+1) H(+)(in) = a plastoquinol + NAD(+) + n H(+)(out). The catalysed reaction is a plastoquinone + NADPH + (n+1) H(+)(in) = a plastoquinol + NADP(+) + n H(+)(out). In terms of biological role, NDH shuttles electrons from NAD(P)H:plastoquinone, via FMN and iron-sulfur (Fe-S) centers, to quinones in the photosynthetic chain and possibly in a chloroplast respiratory chain. The immediate electron acceptor for the enzyme in this species is believed to be plastoquinone. Couples the redox reaction to proton translocation, and thus conserves the redox energy in a proton gradient. This is NAD(P)H-quinone oxidoreductase subunit H, chloroplastic from Morus indica (Mulberry).